The sequence spans 222 residues: MSEASRDDYKIQSFDAETQQLLKTALKDPGAVDLERVANVIVDHSLQDCVFSKEAGRMCYAIIQAESKQAGQSVFRRGLLNRLQKEYDAREQLRACSLQGWVCYVTFICNIFDYLRVNNMPMMALVNPVYDCLFQLAQPESLSREEEVDCLVLQLHRVGEQLEKMNGQRMDELFILIRDGFLLPTDLSSLARLLLLEMIEFRAAGWKTTPAAHKYYYSEVSD.

The MIF4G domain occupies Glu-3–Gly-205.

The protein belongs to the MIF4GD family. Interacts with EIF4G1, EIF4G2 and SLBP; probably tethered by SLBP to the 3'-end of mRNAs ending with the histone stem-loop, it also interacts with EIF4G1 which is bound to their 5'-end.

The protein resides in the cytoplasm. It localises to the nucleus. Its function is as follows. Functions in replication-dependent translation of histone mRNAs which differ from other eukaryotic mRNAs in that they do not end with a poly-A tail but a stem-loop. May participate in circularizing those mRNAs specifically enhancing their translation. The sequence is that of MIF4G domain-containing protein (Mif4gd) from Mus musculus (Mouse).